The following is a 104-amino-acid chain: Signal recognition particle 19 kDa protein (104 aa).

It belongs to the SRP19 family. In terms of assembly, part of the signal recognition particle protein translocation system, which is composed of SRP and FtsY. Archaeal SRP consists of a 7S RNA molecule of 300 nucleotides and two protein subunits: SRP54 and SRP19.

It is found in the cytoplasm. Involved in targeting and insertion of nascent membrane proteins into the cytoplasmic membrane. Binds directly to 7S RNA and mediates binding of the 54 kDa subunit of the SRP. The chain is Signal recognition particle 19 kDa protein from Archaeoglobus fulgidus (strain ATCC 49558 / DSM 4304 / JCM 9628 / NBRC 100126 / VC-16).